A 480-amino-acid polypeptide reads, in one-letter code: Iron-sulfur cluster assembly SufBD family protein slr0074 (480 aa).

This sequence belongs to the iron-sulfur cluster assembly SufBD family.

This Synechocystis sp. (strain ATCC 27184 / PCC 6803 / Kazusa) protein is Iron-sulfur cluster assembly SufBD family protein slr0074.